Consider the following 143-residue polypeptide: FAD synthase (143 aa).

ATP is bound by residues 10–11 (TF), 15–18 (HPGH), and Asp-93.

This sequence belongs to the archaeal FAD synthase family. Homodimer. A divalent metal cation serves as cofactor.

The catalysed reaction is FMN + ATP + H(+) = FAD + diphosphate. The protein operates within cofactor biosynthesis; FAD biosynthesis; FAD from FMN: step 1/1. In terms of biological role, catalyzes the transfer of the AMP portion of ATP to flavin mononucleotide (FMN) to produce flavin adenine dinucleotide (FAD) coenzyme. This Haloterrigena turkmenica (strain ATCC 51198 / DSM 5511 / JCM 9101 / NCIMB 13204 / VKM B-1734 / 4k) (Halococcus turkmenicus) protein is FAD synthase.